The following is a 341-amino-acid chain: L-threonine 3-dehydrogenase (341 aa).

Residue cysteine 38 participates in Zn(2+) binding. Residues threonine 40 and histidine 43 each act as charge relay system in the active site. Positions 63, 64, 93, 96, 99, and 107 each coordinate Zn(2+). Residues isoleucine 175, aspartate 195, arginine 200, 262-264, and 286-287 contribute to the NAD(+) site; these read LGI and IY.

Belongs to the zinc-containing alcohol dehydrogenase family. Homotetramer. Zn(2+) serves as cofactor.

The protein resides in the cytoplasm. It carries out the reaction L-threonine + NAD(+) = (2S)-2-amino-3-oxobutanoate + NADH + H(+). The protein operates within amino-acid degradation; L-threonine degradation via oxydo-reductase pathway; glycine from L-threonine: step 1/2. In terms of biological role, catalyzes the NAD(+)-dependent oxidation of L-threonine to 2-amino-3-ketobutyrate. In Colwellia psychrerythraea (strain 34H / ATCC BAA-681) (Vibrio psychroerythus), this protein is L-threonine 3-dehydrogenase.